We begin with the raw amino-acid sequence, 295 residues long: Ribosomal RNA small subunit methyltransferase A (295 aa).

S-adenosyl-L-methionine contacts are provided by asparagine 29, leucine 31, glycine 56, glutamate 77, aspartate 102, and asparagine 128.

Belongs to the class I-like SAM-binding methyltransferase superfamily. rRNA adenine N(6)-methyltransferase family. RsmA subfamily.

The protein resides in the cytoplasm. The catalysed reaction is adenosine(1518)/adenosine(1519) in 16S rRNA + 4 S-adenosyl-L-methionine = N(6)-dimethyladenosine(1518)/N(6)-dimethyladenosine(1519) in 16S rRNA + 4 S-adenosyl-L-homocysteine + 4 H(+). Functionally, specifically dimethylates two adjacent adenosines (A1518 and A1519) in the loop of a conserved hairpin near the 3'-end of 16S rRNA in the 30S particle. May play a critical role in biogenesis of 30S subunits. The sequence is that of Ribosomal RNA small subunit methyltransferase A from Listeria monocytogenes serotype 4a (strain HCC23).